The sequence spans 96 residues: ATP synthase subunit c (96 aa).

2 consecutive transmembrane segments (helical) span residues 24–44 (HVGAYIGAGMAMTAAAGVGVG) and 75–95 (AIAESSAIYGLIIAFILIFVA).

Belongs to the ATPase C chain family. F-type ATPases have 2 components, F(1) - the catalytic core - and F(0) - the membrane proton channel. F(1) has five subunits: alpha(3), beta(3), gamma(1), delta(1), epsilon(1). F(0) has three main subunits: a(1), b(2) and c(10-14). The alpha and beta chains form an alternating ring which encloses part of the gamma chain. F(1) is attached to F(0) by a central stalk formed by the gamma and epsilon chains, while a peripheral stalk is formed by the delta and b chains.

It localises to the cell membrane. Its function is as follows. F(1)F(0) ATP synthase produces ATP from ADP in the presence of a proton or sodium gradient. F-type ATPases consist of two structural domains, F(1) containing the extramembraneous catalytic core and F(0) containing the membrane proton channel, linked together by a central stalk and a peripheral stalk. During catalysis, ATP synthesis in the catalytic domain of F(1) is coupled via a rotary mechanism of the central stalk subunits to proton translocation. Functionally, key component of the F(0) channel; it plays a direct role in translocation across the membrane. A homomeric c-ring of between 10-14 subunits forms the central stalk rotor element with the F(1) delta and epsilon subunits. The chain is ATP synthase subunit c from Mycoplasmoides gallisepticum (strain R(low / passage 15 / clone 2)) (Mycoplasma gallisepticum).